The chain runs to 91 residues: uncharacterized protein (91 aa).

A run of 3 helical transmembrane segments spans residues 6-26, 37-57, and 68-88; these read AAAVFSITIPIISAILIINFF, MPVFFPLLLSPIGIILAFVSI, and IVLNAIMFPFPFFWFIGGALL.

It localises to the cell membrane. This is an uncharacterized protein from Bacillus subtilis (strain 168).